A 516-amino-acid chain; its full sequence is uncharacterized protein (516 aa).

This sequence to H.influenzae HI_0521.

This is an uncharacterized protein from Escherichia coli (strain K12).